Consider the following 208-residue polypeptide: ATP phosphoribosyltransferase (208 aa).

This sequence belongs to the ATP phosphoribosyltransferase family. Short subfamily. In terms of assembly, heteromultimer composed of HisG and HisZ subunits.

It localises to the cytoplasm. The enzyme catalyses 1-(5-phospho-beta-D-ribosyl)-ATP + diphosphate = 5-phospho-alpha-D-ribose 1-diphosphate + ATP. The protein operates within amino-acid biosynthesis; L-histidine biosynthesis; L-histidine from 5-phospho-alpha-D-ribose 1-diphosphate: step 1/9. Its function is as follows. Catalyzes the condensation of ATP and 5-phosphoribose 1-diphosphate to form N'-(5'-phosphoribosyl)-ATP (PR-ATP). Has a crucial role in the pathway because the rate of histidine biosynthesis seems to be controlled primarily by regulation of HisG enzymatic activity. The chain is ATP phosphoribosyltransferase from Oceanobacillus iheyensis (strain DSM 14371 / CIP 107618 / JCM 11309 / KCTC 3954 / HTE831).